A 119-amino-acid polypeptide reads, in one-letter code: Large ribosomal subunit protein uL22c (119 aa).

The protein belongs to the universal ribosomal protein uL22 family. Part of the 50S ribosomal subunit.

The protein localises to the plastid. It is found in the chloroplast. Functionally, this protein binds specifically to 23S rRNA. The globular domain of the protein is located near the polypeptide exit tunnel on the outside of the subunit, while an extended beta-hairpin is found that lines the wall of the exit tunnel in the center of the 70S ribosome. The sequence is that of Large ribosomal subunit protein uL22c (rpl22) from Anthoceros angustus (Hornwort).